Here is a 321-residue protein sequence, read N- to C-terminus: Phospho-N-acetylmuramoyl-pentapeptide-transferase (321 aa).

A run of 10 helical transmembrane segments spans residues 1–21 (MIYV…PILI), 49–69 (TMGG…AIIF), 77–97 (ILLL…DYII), 112–132 (FLAQ…FNMI), 140–160 (IPFT…IVFW), 176–196 (GLAT…SFML), 200–220 (AVGT…IYNV), 225–245 (VFMG…VSIM), 250–270 (ISLI…ILQV), and 300–320 (VVSV…WIGV).

This sequence belongs to the glycosyltransferase 4 family. MraY subfamily. The cofactor is Mg(2+).

It is found in the cell membrane. It catalyses the reaction UDP-N-acetyl-alpha-D-muramoyl-L-alanyl-gamma-D-glutamyl-L-lysyl-D-alanyl-D-alanine + di-trans,octa-cis-undecaprenyl phosphate = Mur2Ac(oyl-L-Ala-gamma-D-Glu-L-Lys-D-Ala-D-Ala)-di-trans,octa-cis-undecaprenyl diphosphate + UMP. It participates in cell wall biogenesis; peptidoglycan biosynthesis. Its function is as follows. Catalyzes the initial step of the lipid cycle reactions in the biosynthesis of the cell wall peptidoglycan: transfers peptidoglycan precursor phospho-MurNAc-pentapeptide from UDP-MurNAc-pentapeptide onto the lipid carrier undecaprenyl phosphate, yielding undecaprenyl-pyrophosphoryl-MurNAc-pentapeptide, known as lipid I. The sequence is that of Phospho-N-acetylmuramoyl-pentapeptide-transferase from Staphylococcus carnosus (strain TM300).